Here is a 136-residue protein sequence, read N- to C-terminus: Transmembrane protein 203 (136 aa).

Residues 1-51 (MLFSLRELVQWLGFATFEIFVHLLALLVFSVLLALRVDGLVPGLSWWNVFV) form an interaction with STING1 region. 4 helical membrane-spanning segments follow: residues 14–34 (FATFEIFVHLLALLVFSVLLA), 50–72 (FVPFFAADGLSTYFTTIVSVRLF), 81–101 (VLRLFWVLTVLSLKFVFEMLL), and 112–132 (LWFGLITSPLFILLQLLMIRA). The required for the lysosomal localization of the STING-TMEM203 complex stretch occupies residues 52-136 (PFFAADGLST…LLMIRACRVN (85 aa)).

Homodimer. Interacts with ATP2A2, ITPR3 and STIM1. Interacts with STING1 (via transmembrane domain). Increased expression seen in T-lymphocytes from patients with systemic lupus erythematosus (SLE).

The protein localises to the endoplasmic reticulum membrane. The protein resides in the endoplasmic reticulum-Golgi intermediate compartment. Its subcellular location is the lysosome membrane. Involved in the regulation of cellular calcium homeotasis. Required for spermatogenesis. Acts as a regulator of STING-mediated inflammatory signaling in macrophages. Forms a complex with STING, promoting the activity of TBK1 kinase and the transcription factor IRF3, leading to activation of type I interferon expression. In Homo sapiens (Human), this protein is Transmembrane protein 203 (TMEM203).